Reading from the N-terminus, the 484-residue chain is MRGARPDEFNFSTNPSTPNTGQPTPTYPAGVGGGGGGRKKGVGVRTWLVLNSSGQSEPKEEGKHSIMRRTGLPARDLRILDPLLSYPSTVLGRERAIVINLEHIKAIITAQEVLLLNSKDPSVSPFIDELQRRILCHHHATKPQEEQNSGGEPHTRVDPAQGEAGTEQSSGDQGSEAKKDAKQSLENQDGSKVLPFEFVALEACLEAASSSLEHEALRLELEAHPALDKLTSKISTLNLERVRQIKSRLVAITGRVQKVRDELEHLLDDDEDMAEMYLTEKLAQKLEDSSNSSMNESDTFEVDLPQGDEDDRLPPEFASEANRDGRYLQANDAHELLMSTQSALSRNSRGTHTSSTRSAMTNKLDVEELEMLLEAYFVQIDGILNKLSTLREYVDDTEDYINIMLDDKQNHLLQMGVMLTTATLVMSAFIAVAGVFGMNITIELFTDNKHGPSRFIWTVIGGSIGSICLYVGAIGWCKYKRLLE.

Disordered regions lie at residues 1–40 (MRGARPDEFNFSTNPSTPNTGQPTPTYPAGVGGGGGGRKK) and 141–186 (TKPQ…QSLE). Over residues 10–24 (NFSTNPSTPNTGQPT) the composition is skewed to polar residues. Positions 203 to 275 (ACLEAASSSL…LLDDDEDMAE (73 aa)) form a coiled coil. Positions 286 to 320 (LEDSSNSSMNESDTFEVDLPQGDEDDRLPPEFASE) are disordered. The span at 298–311 (DTFEVDLPQGDEDD) shows a compositional bias: acidic residues. A helical transmembrane segment spans residues 416–436 (GVMLTTATLVMSAFIAVAGVF). The Required for magnesium transport activity signature appears at 437 to 439 (GMN). A helical transmembrane segment spans residues 455–475 (FIWTVIGGSIGSICLYVGAIG).

The protein belongs to the CorA metal ion transporter (MIT) (TC 1.A.35.5) family. In terms of tissue distribution, expressed in the whole plant.

Its subcellular location is the membrane. In terms of biological role, magnesium transporter that may mediate the influx of magnesium. The protein is Magnesium transporter MRS2-3 (MRS2-3) of Arabidopsis thaliana (Mouse-ear cress).